We begin with the raw amino-acid sequence, 446 residues long: NADH oxidase (446 aa).

Residues 7–11, Asp32, Cys42, Val79, 109–112, Lys131, and Tyr158 contribute to the FAD site; these read GTNHA and ATGS. The active-site Proton acceptor is the His10. Cys42 acts as the Redox-active in catalysis. Cys42 carries the cysteine sulfinic acid (-SO2H) modification. 4 residues coordinate NAD(+): Ile159, Asp178, Tyr187, and Gly244. Asp282 is an FAD binding site. Ala298 contacts NAD(+). Positions 299, 300, and 301 each coordinate FAD. Gly329 contributes to the NAD(+) binding site. Phe427 is an FAD binding site.

It belongs to the class-III pyridine nucleotide-disulfide oxidoreductase family. Homodimer. The cofactor is FAD.

The catalysed reaction is 2 NADH + O2 + 2 H(+) = 2 NAD(+) + 2 H2O. Its activity is regulated as follows. Inhibited by hydrogen peroxide, sulfhydryl reagents and quinine, but not by EDTA. Functionally, catalyzes the four-electron reduction of molecular oxygen to water. Active on beta-NADH, but not on alpha-NADH, beta-NADPH or alpha-NADPH. Under aerobic conditions, oxygen acts as the electron acceptor. Under anaerobic conditions, DCIP and MB can replace oxygen as the electron acceptor. This is NADH oxidase from Lactococcus lactis subsp. cremoris (strain MG1363).